An 828-amino-acid polypeptide reads, in one-letter code: Periplasmic nitrate reductase (828 aa).

Positions 1-31 (MKLSRRHFMKANAVAAAAAVAGITIPIAVRA) form a signal peptide, tat-type signal. In terms of domain architecture, 4Fe-4S Mo/W bis-MGD-type spans 39 to 95 (IHWDKAPCRFCGVGCGVLVGTQNGRIVASQGDPDAPVNRGLNCIKGYFLPKIMYGQD). [4Fe-4S] cluster contacts are provided by C46, C49, C53, and C81. Residues K83, Q150, N175, C179, 212 to 219 (WGSNMAEM), 243 to 247 (STYQH), 262 to 264 (QTD), M372, Q376, N482, 508 to 509 (SD), K531, D558, and 718 to 727 (TGRVLEHWHT) contribute to the Mo-bis(molybdopterin guanine dinucleotide) site. Residue F794 coordinates substrate. Mo-bis(molybdopterin guanine dinucleotide) is bound by residues N802 and K819.

The protein belongs to the prokaryotic molybdopterin-containing oxidoreductase family. NasA/NapA/NarB subfamily. Component of the periplasmic nitrate reductase NapAB complex composed of NapA and NapB. [4Fe-4S] cluster is required as a cofactor. Requires Mo-bis(molybdopterin guanine dinucleotide) as cofactor. Post-translationally, predicted to be exported by the Tat system. The position of the signal peptide cleavage has not been experimentally proven.

Its subcellular location is the periplasm. The enzyme catalyses 2 Fe(II)-[cytochrome] + nitrate + 2 H(+) = 2 Fe(III)-[cytochrome] + nitrite + H2O. Catalytic subunit of the periplasmic nitrate reductase complex NapAB. Receives electrons from NapB and catalyzes the reduction of nitrate to nitrite. The protein is Periplasmic nitrate reductase of Pectobacterium carotovorum subsp. carotovorum (strain PC1).